Here is a 177-residue protein sequence, read N- to C-terminus: 3-isopropylmalate dehydratase small subunit 1 (177 aa).

Residues glycine 157–glutamate 177 form a disordered region. The span at glutamate 162–glutamate 177 shows a compositional bias: low complexity.

The protein belongs to the LeuD family. LeuD type 2 subfamily. In terms of assembly, heterodimer of LeuC and LeuD.

The enzyme catalyses (2R,3S)-3-isopropylmalate = (2S)-2-isopropylmalate. Its pathway is amino-acid biosynthesis; L-leucine biosynthesis; L-leucine from 3-methyl-2-oxobutanoate: step 2/4. Its function is as follows. Catalyzes the isomerization between 2-isopropylmalate and 3-isopropylmalate, via the formation of 2-isopropylmaleate. The sequence is that of 3-isopropylmalate dehydratase small subunit 1 (leuD1) from Deinococcus radiodurans (strain ATCC 13939 / DSM 20539 / JCM 16871 / CCUG 27074 / LMG 4051 / NBRC 15346 / NCIMB 9279 / VKM B-1422 / R1).